Consider the following 171-residue polypeptide: CDP-archaeol synthase (171 aa).

Helical transmembrane passes span 7 to 27 (MFWA…PVLL), 55 to 75 (FLGG…LTPA), 84 to 104 (VLLA…GSFI), 115 to 135 (PAVG…AYPV), and 141 to 161 (GQML…NYFA).

The protein belongs to the CDP-archaeol synthase family. The cofactor is Mg(2+).

The protein localises to the cell membrane. The catalysed reaction is 2,3-bis-O-(geranylgeranyl)-sn-glycerol 1-phosphate + CTP + H(+) = CDP-2,3-bis-O-(geranylgeranyl)-sn-glycerol + diphosphate. It participates in membrane lipid metabolism; glycerophospholipid metabolism. In terms of biological role, catalyzes the formation of CDP-2,3-bis-(O-geranylgeranyl)-sn-glycerol (CDP-archaeol) from 2,3-bis-(O-geranylgeranyl)-sn-glycerol 1-phosphate (DGGGP) and CTP. This reaction is the third ether-bond-formation step in the biosynthesis of archaeal membrane lipids. The chain is CDP-archaeol synthase from Thermococcus gammatolerans (strain DSM 15229 / JCM 11827 / EJ3).